The chain runs to 280 residues: Ribosomal RNA small subunit methyltransferase A (280 aa).

6 residues coordinate S-adenosyl-L-methionine: N28, L30, G55, E77, D103, and N122.

The protein belongs to the class I-like SAM-binding methyltransferase superfamily. rRNA adenine N(6)-methyltransferase family. RsmA subfamily.

The protein resides in the cytoplasm. The catalysed reaction is adenosine(1518)/adenosine(1519) in 16S rRNA + 4 S-adenosyl-L-methionine = N(6)-dimethyladenosine(1518)/N(6)-dimethyladenosine(1519) in 16S rRNA + 4 S-adenosyl-L-homocysteine + 4 H(+). Functionally, specifically dimethylates two adjacent adenosines (A1518 and A1519) in the loop of a conserved hairpin near the 3'-end of 16S rRNA in the 30S particle. May play a critical role in biogenesis of 30S subunits. This Ruegeria sp. (strain TM1040) (Silicibacter sp.) protein is Ribosomal RNA small subunit methyltransferase A.